The sequence spans 263 residues: Inner membrane protein YpjD (263 aa).

The Periplasmic segment spans residues 1–3 (MPV). A helical membrane pass occupies residues 4 to 23 (FALLALVAYSVSLALIVPGL). The Cytoplasmic segment spans residues 24 to 34 (LQKNGGWRRMA). A helical transmembrane segment spans residues 35–54 (IISAVIALVCHAIALEARIL). Over 55-63 (PDGDSGQNL) the chain is Periplasmic. A helical membrane pass occupies residues 64–83 (SLLNVGSLVSLMICTVMTIV). Over 84–89 (ASRNRG) the chain is Cytoplasmic. Residues 90–109 (WLLLPIVYAFALINLALATF) traverse the membrane as a helical segment. Residues 110–123 (MPNEYITHLEATPG) are Periplasmic-facing. A helical membrane pass occupies residues 124-146 (MLVHIGLSLFSYATLIIAALYAL). Residues 147–181 (QLAWIDYQLKNKKLAFNQEMPPLMSIERKMFHITQ) lie on the Cytoplasmic side of the membrane. Residues 182-201 (IGVVLLTLTLCTGLFYMHNL) traverse the membrane as a helical segment. Residues 202–210 (FSMENIDKA) lie on the Periplasmic side of the membrane. The chain crosses the membrane as a helical span at residues 211–228 (VLSIVAWFVYIVLLWGHY). Residues 229-236 (HEGWRGRR) are Cytoplasmic-facing. The helical transmembrane segment at 237–259 (VVWFNVAGAVILTLAYFGSRIVQ) threads the bilayer. The Periplasmic segment spans residues 260 to 263 (QLIS).

It is found in the cell inner membrane. This Escherichia coli O157:H7 protein is Inner membrane protein YpjD (ypjD).